The sequence spans 763 residues: Phosphoglycerol transferase I (763 aa).

Helical transmembrane passes span 1-21, 26-46, 77-97, and 108-128; these read MSEL…AWKA, WWFA…ITLF, ILPG…LGWI, and FGYS…SPAF.

It belongs to the OpgB family.

The protein localises to the cell inner membrane. It carries out the reaction a phosphatidylglycerol + a membrane-derived-oligosaccharide D-glucose = a 1,2-diacyl-sn-glycerol + a membrane-derived-oligosaccharide 6-(glycerophospho)-D-glucose.. Its pathway is glycan metabolism; osmoregulated periplasmic glucan (OPG) biosynthesis. In terms of biological role, transfers a phosphoglycerol residue from phosphatidylglycerol to the membrane-bound nascent glucan backbones. In Escherichia coli O6:K15:H31 (strain 536 / UPEC), this protein is Phosphoglycerol transferase I.